We begin with the raw amino-acid sequence, 789 residues long: SWI5-dependent HO expression protein 4 (789 aa).

Ser18 is subject to Phosphoserine.

It is found in the cytoplasm. In terms of biological role, required for mother cell-specific ho expression. Might be required for the transport of factors (such as ASH1) that promote HO repression from the mother cell into its bud. The sequence is that of SWI5-dependent HO expression protein 4 (SHE4) from Saccharomyces cerevisiae (strain ATCC 204508 / S288c) (Baker's yeast).